Reading from the N-terminus, the 378-residue chain is Deoxyguanosinetriphosphate triphosphohydrolase-like protein (378 aa).

One can recognise an HD domain in the interval 62-198; it reads RLTHTIEVAQ…AAVADDVAYN (137 aa).

This sequence belongs to the dGTPase family. Type 2 subfamily.

In Paracoccus denitrificans (strain Pd 1222), this protein is Deoxyguanosinetriphosphate triphosphohydrolase-like protein.